The chain runs to 335 residues: Serpentine receptor class alpha-25 (335 aa).

5 helical membrane-spanning segments follow: residues 22–42 (IPVK…FYFA), 151–171 (LLII…YGVP), 195–215 (FRTV…YLSV), 245–265 (CILI…VNYI), and 280–300 (LAPF…VIYF).

Belongs to the nematode receptor-like protein sra family.

It localises to the membrane. In Caenorhabditis elegans, this protein is Serpentine receptor class alpha-25 (sra-25).